The primary structure comprises 146 residues: 3-dehydroquinate dehydratase (146 aa).

Catalysis depends on tyrosine 23, which acts as the Proton acceptor. Residues asparagine 74, histidine 80, and aspartate 87 each contribute to the substrate site. Residue histidine 100 is the Proton donor of the active site. Substrate contacts are provided by residues 101–102 and arginine 111; that span reads IS.

The protein belongs to the type-II 3-dehydroquinase family. As to quaternary structure, homododecamer.

It carries out the reaction 3-dehydroquinate = 3-dehydroshikimate + H2O. It functions in the pathway metabolic intermediate biosynthesis; chorismate biosynthesis; chorismate from D-erythrose 4-phosphate and phosphoenolpyruvate: step 3/7. Functionally, catalyzes a trans-dehydration via an enolate intermediate. This chain is 3-dehydroquinate dehydratase, found in Bacillus cereus (strain ATCC 14579 / DSM 31 / CCUG 7414 / JCM 2152 / NBRC 15305 / NCIMB 9373 / NCTC 2599 / NRRL B-3711).